The sequence spans 362 residues: Heat-inducible transcription repressor HrcA (362 aa).

Belongs to the HrcA family.

Functionally, negative regulator of class I heat shock genes (grpE-dnaK-dnaJ and groELS operons). Prevents heat-shock induction of these operons. The polypeptide is Heat-inducible transcription repressor HrcA (Rhodopseudomonas palustris (strain BisB18)).